The primary structure comprises 294 residues: Lipoyl synthase (294 aa).

[4Fe-4S] cluster is bound by residues cysteine 35, cysteine 40, cysteine 46, cysteine 61, cysteine 65, cysteine 68, and serine 273. The Radical SAM core domain maps to 47–262 (FRQRQATFLI…REQALSMGFE (216 aa)).

This sequence belongs to the radical SAM superfamily. Lipoyl synthase family. [4Fe-4S] cluster is required as a cofactor.

It localises to the cytoplasm. It catalyses the reaction [[Fe-S] cluster scaffold protein carrying a second [4Fe-4S](2+) cluster] + N(6)-octanoyl-L-lysyl-[protein] + 2 oxidized [2Fe-2S]-[ferredoxin] + 2 S-adenosyl-L-methionine + 4 H(+) = [[Fe-S] cluster scaffold protein] + N(6)-[(R)-dihydrolipoyl]-L-lysyl-[protein] + 4 Fe(3+) + 2 hydrogen sulfide + 2 5'-deoxyadenosine + 2 L-methionine + 2 reduced [2Fe-2S]-[ferredoxin]. It participates in protein modification; protein lipoylation via endogenous pathway; protein N(6)-(lipoyl)lysine from octanoyl-[acyl-carrier-protein]: step 2/2. Its function is as follows. Catalyzes the radical-mediated insertion of two sulfur atoms into the C-6 and C-8 positions of the octanoyl moiety bound to the lipoyl domains of lipoate-dependent enzymes, thereby converting the octanoylated domains into lipoylated derivatives. In Geotalea daltonii (strain DSM 22248 / JCM 15807 / FRC-32) (Geobacter daltonii), this protein is Lipoyl synthase.